Consider the following 62-residue polypeptide: Metallothionein-like protein 3A (62 aa).

It belongs to the metallothionein superfamily. Type 15 family.

Functionally, metallothioneins have a high content of cysteine residues that bind various heavy metals. In Oryza sativa subsp. indica (Rice), this protein is Metallothionein-like protein 3A (MT3A).